We begin with the raw amino-acid sequence, 398 residues long: Tyrosine--tRNA ligase (398 aa).

The 'HIGH' region signature appears at 42 to 51 (PTAPDIHLGH). The short motif at 226–230 (KMSKS) is the 'KMSKS' region element. Lys-229 is a binding site for ATP. In terms of domain architecture, S4 RNA-binding spans 336 to 397 (LAIANLLKDA…GKRKFAKVTL (62 aa)).

This sequence belongs to the class-I aminoacyl-tRNA synthetase family. TyrS type 2 subfamily. In terms of assembly, homodimer.

The protein resides in the cytoplasm. The enzyme catalyses tRNA(Tyr) + L-tyrosine + ATP = L-tyrosyl-tRNA(Tyr) + AMP + diphosphate + H(+). Its function is as follows. Catalyzes the attachment of tyrosine to tRNA(Tyr) in a two-step reaction: tyrosine is first activated by ATP to form Tyr-AMP and then transferred to the acceptor end of tRNA(Tyr). This Shewanella oneidensis (strain ATCC 700550 / JCM 31522 / CIP 106686 / LMG 19005 / NCIMB 14063 / MR-1) protein is Tyrosine--tRNA ligase.